Reading from the N-terminus, the 237-residue chain is Ribosomal RNA small subunit methyltransferase G (237 aa).

S-adenosyl-L-methionine-binding positions include glycine 78, phenylalanine 83, 129–130 (AE), and arginine 148.

This sequence belongs to the methyltransferase superfamily. RNA methyltransferase RsmG family.

The protein localises to the cytoplasm. Its function is as follows. Specifically methylates the N7 position of a guanine in 16S rRNA. In Streptococcus equi subsp. zooepidemicus (strain MGCS10565), this protein is Ribosomal RNA small subunit methyltransferase G.